Consider the following 690-residue polypeptide: Tripartite terminase subunit 3 (690 aa).

The short motif at 226 to 233 (IPRRHGKT) is the Walker A motif element. The Walker B motif motif lies at 321 to 326 (LLFVDE). The For ATPase activity role is filled by E326. Residues D481, E555, and D667 each act as for nuclease activity in the active site.

Belongs to the herpesviridae TRM3 protein family. As to quaternary structure, interacts with the terminase subunits TRM1 and TRM2. Interacts with portal protein.

Its subcellular location is the host nucleus. Its function is as follows. Component of the molecular motor that translocates viral genomic DNA in empty capsid during DNA packaging. Forms a tripartite terminase complex together with TRM1 and TRM2 in the host cytoplasm. Once the complex reaches the host nucleus, it interacts with the capsid portal vertex. This portal forms a ring in which genomic DNA is translocated into the capsid. TRM3 carries an RNase H-like nuclease activity that plays an important role for the cleavage of concatemeric viral DNA into unit length genomes. This is Tripartite terminase subunit 3 from Homo sapiens (Human).